The following is a 307-amino-acid chain: Malate dehydrogenase (307 aa).

NAD(+) is bound by residues glycine 8 to glycine 13 and aspartate 32. The substrate site is built by arginine 81 and arginine 87. NAD(+) contacts are provided by residues asparagine 94 and valine 117–asparagine 119. Substrate-binding residues include asparagine 119 and arginine 150. The active-site Proton acceptor is histidine 174.

It belongs to the LDH/MDH superfamily. MDH type 3 family.

It carries out the reaction (S)-malate + NAD(+) = oxaloacetate + NADH + H(+). In terms of biological role, catalyzes the reversible oxidation of malate to oxaloacetate. In Dehalococcoides mccartyi (strain CBDB1), this protein is Malate dehydrogenase.